The sequence spans 377 residues: Putative zinc metalloprotease Atu1380 (377 aa).

His-29 contacts Zn(2+). Glu-30 is an active-site residue. Residue His-33 coordinates Zn(2+). 3 helical membrane-spanning segments follow: residues 118–140 (VAAG…FGIY), 299–321 (LGIS…LNLM), and 351–373 (VAFR…NDIS). One can recognise a PDZ domain in the interval 129 to 202 (AILIFAVLFG…TPITVTVERA (74 aa)).

This sequence belongs to the peptidase M50B family. Zn(2+) is required as a cofactor.

The protein resides in the cell inner membrane. The sequence is that of Putative zinc metalloprotease Atu1380 from Agrobacterium fabrum (strain C58 / ATCC 33970) (Agrobacterium tumefaciens (strain C58)).